The following is a 621-amino-acid chain: ATP-dependent DNA helicase Q1 (621 aa).

A Helicase ATP-binding domain is found at 100-275 (VNATMARKDI…QKILCVEKCL (176 aa)). Position 113–120 (113–120 (MPTGGGKS)) interacts with ATP. Residues 219–222 (DEVH) carry the DEVH box motif. A Helicase C-terminal domain is found at 296-451 (SAEDFIENIA…EMVSYCQNIS (156 aa)). Residues Cys-453, Cys-471, Cys-475, and Cys-478 each contribute to the Zn(2+) site. 2 positions are modified to N6-acetyllysine: Lys-514 and Lys-522. Ser-597 and Ser-602 each carry phosphoserine.

Belongs to the helicase family. RecQ subfamily. As to quaternary structure, may form homodimers or higher order oligomers. Interacts with EXO1. Interacts with MLH1. Interacts with PARP1. It depends on Mg(2+) as a cofactor. Mn(2+) is required as a cofactor. Requires Zn(2+) as cofactor.

The protein resides in the nucleus. The catalysed reaction is Couples ATP hydrolysis with the unwinding of duplex DNA by translocating in the 3'-5' direction.. It carries out the reaction ATP + H2O = ADP + phosphate + H(+). It catalyses the reaction dATP + H2O = dADP + phosphate + H(+). Functionally, DNA helicase that plays a role in DNA damage repair and genome stability. Exhibits a magnesium- and ATP-dependent DNA-helicase activity that unwinds single- and double-stranded DNA in a 3'-5' direction. Plays a role in restoring regressed replication forks. Required to restart stalled replication forks induced by abortive topoisomerase 1 and 2 lesions. May play a role in the repair of DNA that is damaged by ultraviolet light or other mutagens. The protein is ATP-dependent DNA helicase Q1 (Recql) of Rattus norvegicus (Rat).